The following is a 695-amino-acid chain: Lactotransferrin (695 aa).

A signal peptide spans 1-6; it reads LGLCLA. 2 consecutive Transferrin-like domains span residues 12–339 and 351–680; these read VRWC…NLRE and VVWC…NLRR. Disulfide bonds link Cys-15–Cys-51 and Cys-25–Cys-42. Asp-66 is a binding site for Fe(3+). Lys-79 is a catalytic residue. Tyr-98 serves as a coordination point for Fe(3+). 5 disulfide bridges follow: Cys-121/Cys-204, Cys-163/Cys-179, Cys-166/Cys-189, Cys-176/Cys-187, and Cys-237/Cys-251. Hydrogencarbonate contacts are provided by Thr-123, Arg-127, Ala-129, and Gly-130. Asn-143 carries N-linked (GlcNAc...) asparagine glycosylation. Residue Tyr-198 coordinates Fe(3+). His-259 serves as a coordination point for Fe(3+). The active-site Nucleophile is the Ser-265. Asn-287 is a glycosylation site (N-linked (GlcNAc...) asparagine). 2 disulfide bridges follow: Cys-354/Cys-386 and Cys-364/Cys-377. Residue Asp-401 participates in Fe(3+) binding. 8 cysteine pairs are disulfide-bonded: Cys-411–Cys-690, Cys-431–Cys-653, Cys-463–Cys-538, Cys-487–Cys-681, Cys-497–Cys-511, Cys-508–Cys-521, Cys-579–Cys-593, and Cys-631–Cys-636. Residue Pro-436 coordinates D-glucose. Tyr-439 contacts Fe(3+). Thr-465, Arg-469, Ala-471, and Ala-472 together coordinate hydrogencarbonate. Asn-482 is a glycosylation site (N-linked (GlcNAc...) asparagine). Fe(3+) is bound at residue Tyr-532. Position 600 (Asn-600) interacts with D-glucose. His-601 is a binding site for Fe(3+). A D-glucose-binding site is contributed by Tyr-666.

It belongs to the transferrin family. Monomer. Found in a complex with LTF, CLU, EPPIN and SEMG1. Found in a complex with MPO and LTF; interacts directly with CP, allows Fe(3+) incorporation into LTF and activation of CP ferroxidase activity. Post-translationally, poly-N-acetyllactosaminic carbohydrate moiety seems to be needed for TLR4 activation.

The protein localises to the secreted. Its subcellular location is the cytoplasmic granule. Its function is as follows. Transferrins are iron binding transport proteins which can bind two Fe(3+) ions in association with the binding of an anion, usually bicarbonate. Major iron-binding and multifunctional protein found in exocrine fluids such as breast milk and mucosal secretions. Has antimicrobial activity, which depends on the extracellular cation concentration. Antimicrobial properties include bacteriostasis, which is related to its ability to sequester free iron and thus inhibit microbial growth, as well as direct bactericidal properties leading to the release of lipopolysaccharides from the bacterial outer membrane. Can also prevent bacterial biofilm development in P.aeruginosa infection. Has weak antifungal activity against C.albicans. Has anabolic, differentiating and anti-apoptotic effects on osteoblasts and can also inhibit osteoclastogenesis, possibly playing a role in the regulation of bone growth. Promotes binding of species C adenoviruses to epithelial cells, promoting adenovirus infection. Can inhibit papillomavirus infections. Stimulates the TLR4 signaling pathway leading to NF-kappa-B activation and subsequent pro-inflammatory cytokine production while also interfering with the lipopolysaccharide (LPS)-stimulated TLR4 signaling. Inhibits neutrophil granulocyte migration to sites of apoptosis, when secreted by apoptotic cells. Stimulates VEGFA-mediated endothelial cell migration and proliferation. Binds heparin, chondroitin sulfate and possibly other glycosaminoglycans (GAGs). Also binds specifically to pneumococcal surface protein A (PspA), the lipid A portion of bacterial lipopolysaccharide (LPS), lysozyme and DNA. In terms of biological role, lactoferricin binds to the bacterial surface and is crucial for the bactericidal functions. Has some antiviral activity against papillomavirus infection. N-terminal region shows strong antifungal activity against C.albicans. Contains two BBXB heparin-binding consensus sequences that appear to form the predominate functional GAG-binding site. Functionally, the lactotransferrin transferrin-like domain 1 functions as a serine protease of the peptidase S60 family that cuts arginine rich regions. This function contributes to the antimicrobial activity. Shows a preferential cleavage at -Arg-Ser-Arg-Arg-|- and -Arg-Arg-Ser-Arg-|-, and of Z-Phe-Arg-|-aminomethylcoumarin sites. This chain is Lactotransferrin (LTF), found in Equus caballus (Horse).